Consider the following 93-residue polypeptide: Small integral membrane protein 41 (93 aa).

A helical transmembrane segment spans residues 38 to 58; that stretch reads VVLGVLSLLVLCGVLFLGGGL. Basic and acidic residues predominate over residues 71 to 80; it reads REQRASREPE. The segment at 71 to 93 is disordered; that stretch reads REQRASREPEPGSASGEDGDDDS.

It is found in the membrane. The polypeptide is Small integral membrane protein 41 (Homo sapiens (Human)).